The following is a 290-amino-acid chain: Putative speedy protein-like protein 3 (290 aa).

A disordered region spans residues 16–50 (GVDPSPPCRSLGWKRKKEWSDESEEEPEKELAPEP). The segment covering 36–50 (DESEEEPEKELAPEP) has biased composition (acidic residues).

This sequence belongs to the Speedy/Ringo family.

This Homo sapiens (Human) protein is Putative speedy protein-like protein 3.